The sequence spans 594 residues: 4-alpha-glucanotransferase DPE1, chloroplastic/amyloplastic (594 aa).

The N-terminal 37 residues, 1-37 (MATLSLPLPHLTQAIPARARPRPRPLRGIPARLLSCR), are a transit peptide targeting the chloroplast.

It belongs to the disproportionating enzyme family.

It is found in the plastid. The protein localises to the chloroplast. It localises to the amyloplast. The catalysed reaction is Transfers a segment of a (1-&gt;4)-alpha-D-glucan to a new position in an acceptor, which may be glucose or a (1-&gt;4)-alpha-D-glucan.. Chloroplastic alpha-glucanotransferase involved in maltotriose metabolism. The chain is 4-alpha-glucanotransferase DPE1, chloroplastic/amyloplastic (DPE1) from Oryza sativa subsp. japonica (Rice).